The sequence spans 437 residues: Tryptophan--tRNA ligase (437 aa).

The short motif at 74 to 82 (PSGKVHLGH) is the 'HIGH' region element. The 'KMSKS' region motif lies at 321–325 (KMSSS).

The protein belongs to the class-I aminoacyl-tRNA synthetase family.

The protein resides in the cytoplasm. It carries out the reaction tRNA(Trp) + L-tryptophan + ATP = L-tryptophyl-tRNA(Trp) + AMP + diphosphate + H(+). This chain is Tryptophan--tRNA ligase, found in Methanosarcina acetivorans (strain ATCC 35395 / DSM 2834 / JCM 12185 / C2A).